The sequence spans 107 residues: Phosphoribosyl-ATP pyrophosphatase (107 aa).

The protein belongs to the PRA-PH family.

The protein localises to the cytoplasm. The catalysed reaction is 1-(5-phospho-beta-D-ribosyl)-ATP + H2O = 1-(5-phospho-beta-D-ribosyl)-5'-AMP + diphosphate + H(+). It functions in the pathway amino-acid biosynthesis; L-histidine biosynthesis; L-histidine from 5-phospho-alpha-D-ribose 1-diphosphate: step 2/9. The polypeptide is Phosphoribosyl-ATP pyrophosphatase (Methylobacterium radiotolerans (strain ATCC 27329 / DSM 1819 / JCM 2831 / NBRC 15690 / NCIMB 10815 / 0-1)).